The primary structure comprises 71 residues: U3-agatoxin-Ao1a (71 aa).

The N-terminal stretch at 1–20 is a signal peptide; it reads MKAVIFFCLLSVMVFTVIEA. A propeptide spanning residues 21-33 is cleaved from the precursor; that stretch reads VKEEGTKPAEAAR. 4 cysteine pairs are disulfide-bonded: cysteine 35-cysteine 51, cysteine 42-cysteine 56, cysteine 50-cysteine 66, and cysteine 58-cysteine 64. At serine 70 the chain carries Serine amide.

The protein belongs to the neurotoxin 07 (Beta/delta-agtx) family. 01 (aga-2) subfamily. In terms of tissue distribution, expressed by the venom gland.

It is found in the secreted. In terms of biological role, insecticidal neurotoxin that modulates the insect Nav channel (DmNaV1/tipE (para/tipE)) in a unique manner, with both the activation and inactivation processes being affected. The voltage dependence of activation is shifted toward more hyperpolarized potentials (analogous to site 4 toxins) and a non-inactivating persistent sodium current is induced (site 3-like action). Interestingly, both effects take place in a voltage-dependent manner, producing a bell-shaped curve between -80 and 0 mV. Compared to beta/delta-agatoxin-1 to -3, this toxin appears to affect the insect sodium channel only weakly. The polypeptide is U3-agatoxin-Ao1a (Agelena orientalis (Funnel-web spider)).